Consider the following 377-residue polypeptide: N5-carboxyaminoimidazole ribonucleotide synthase (377 aa).

Residues R93, K133, 138-144 (GYDGKGQ), 175-178 (EEFV), E183, H206, and 257-258 (NE) contribute to the ATP site. Residues 97–287 (KALLDRAQVA…QFENHLRAVC (191 aa)) form the ATP-grasp domain.

The protein belongs to the PurK/PurT family. Homodimer.

It carries out the reaction 5-amino-1-(5-phospho-beta-D-ribosyl)imidazole + hydrogencarbonate + ATP = 5-carboxyamino-1-(5-phospho-D-ribosyl)imidazole + ADP + phosphate + 2 H(+). It participates in purine metabolism; IMP biosynthesis via de novo pathway; 5-amino-1-(5-phospho-D-ribosyl)imidazole-4-carboxylate from 5-amino-1-(5-phospho-D-ribosyl)imidazole (N5-CAIR route): step 1/2. In terms of biological role, catalyzes the ATP-dependent conversion of 5-aminoimidazole ribonucleotide (AIR) and HCO(3)(-) to N5-carboxyaminoimidazole ribonucleotide (N5-CAIR). The protein is N5-carboxyaminoimidazole ribonucleotide synthase of Vibrio cholerae serotype O1 (strain ATCC 39315 / El Tor Inaba N16961).